The primary structure comprises 519 residues: Cytochrome P450 52A10 (519 aa).

Position 466 (Cys466) interacts with heme.

It belongs to the cytochrome P450 family. Heme serves as cofactor.

It localises to the membrane. Its function is as follows. Together with an NADPH cytochrome P450 the enzyme system catalyzes the terminal hydroxylation as the first step in the assimilation of alkanes and fatty acids. In Candida maltosa (Yeast), this protein is Cytochrome P450 52A10 (CYP52A10).